A 330-amino-acid polypeptide reads, in one-letter code: Ketol-acid reductoisomerase (NADP(+)) (330 aa).

Positions 3-184 constitute a KARI N-terminal Rossmann domain; it reads LPVYYDKDID…GGGRMGVLKT (182 aa). Residues 26–29, Ser52, and Ser54 contribute to the NADP(+) site; that span reads YGAQ. His109 is an active-site residue. Gly135 contacts NADP(+). Residues 185–329 enclose the KARI C-terminal knotted domain; sequence SFKEECESDL…EILRAPFNHK (145 aa). Positions 193, 197, 229, and 233 each coordinate Mg(2+). A substrate-binding site is contributed by Ser254.

The protein belongs to the ketol-acid reductoisomerase family. Requires Mg(2+) as cofactor.

It carries out the reaction (2R)-2,3-dihydroxy-3-methylbutanoate + NADP(+) = (2S)-2-acetolactate + NADPH + H(+). The enzyme catalyses (2R,3R)-2,3-dihydroxy-3-methylpentanoate + NADP(+) = (S)-2-ethyl-2-hydroxy-3-oxobutanoate + NADPH + H(+). It participates in amino-acid biosynthesis; L-isoleucine biosynthesis; L-isoleucine from 2-oxobutanoate: step 2/4. The protein operates within amino-acid biosynthesis; L-valine biosynthesis; L-valine from pyruvate: step 2/4. Its function is as follows. Involved in the biosynthesis of branched-chain amino acids (BCAA). Catalyzes an alkyl-migration followed by a ketol-acid reduction of (S)-2-acetolactate (S2AL) to yield (R)-2,3-dihydroxy-isovalerate. In the isomerase reaction, S2AL is rearranged via a Mg-dependent methyl migration to produce 3-hydroxy-3-methyl-2-ketobutyrate (HMKB). In the reductase reaction, this 2-ketoacid undergoes a metal-dependent reduction by NADPH to yield (R)-2,3-dihydroxy-isovalerate. In Helicobacter pylori (strain HPAG1), this protein is Ketol-acid reductoisomerase (NADP(+)).